The sequence spans 367 residues: Leucine carboxyl methyltransferase 1 (367 aa).

S-adenosyl-L-methionine is bound by residues arginine 84, glycine 109, aspartate 132, 187 to 188 (DL), and glutamate 212.

The protein belongs to the methyltransferase superfamily. LCMT family.

The catalysed reaction is [phosphatase 2A protein]-C-terminal L-leucine + S-adenosyl-L-methionine = [phosphatase 2A protein]-C-terminal L-leucine methyl ester + S-adenosyl-L-homocysteine. Its function is as follows. Methylates the carboxyl group of the C-terminal leucine residue of protein phosphatase 2A catalytic subunits to form alpha-leucine ester residues. The chain is Leucine carboxyl methyltransferase 1 (PPM1) from Candida albicans (strain SC5314 / ATCC MYA-2876) (Yeast).